We begin with the raw amino-acid sequence, 422 residues long: MKKVRLSEKFTPHFLEVWRTVKAAQHLKYVLKGGRGSAKSTHIAMWIILLMMMMPITFLVIRRVYNTVEQSVFEQLKEAIDMLEVGHLWKVSKSPLRLTYIPRGNSIIFRGGDDVQKIKSIKASKFPVAGMWIEELAEFKTEEEVSVIEKSVLRAELPPGCRYIFFYSYNPPKRKQSWVNKVFNSSFLPANTFVDHSTYLQNPFLSKAFIEEAEEVKRRNELKYRHEYLGEALGSGVVPFENLQIEEGIITDAEVARFDNIRQGLDFGYGPDPLAFVRWHYDKRKNRIYAIDELVDHKVSLKRTADFVRKNKYESARIIADSSEPRSIDALKLEHGINRIEGAKKGPDSVEHGERWLDELDAIVIDPLRTPNIAREFENIDYQTDKNGDPIPRLEDKDNHTIDATRYAFERDMKKGGVSLWG.

An ATPase activity region spans residues 1–198 (MKKVRLSEKF…PANTFVDHST (198 aa)). Positions 33–40 (GGRGSAKS) match the Walker A motif motif. The Walker B motif motif lies at 130 to 135 (GMWIEE). Glu135 functions as the For ATPase activity in the catalytic mechanism. Residues 232–422 (ALGSGVVPFE…MKKGGVSLWG (191 aa)) form a nuclease activity and binding to the portal protein region. The Mn(2+) site is built by Asp266, Asp321, His400, and Asp403.

As to quaternary structure, monomer. Interacts with the terminase small subunit; the active complex is probably composed of two decameric ring-shaped terminase small subunit and two monomeric terminase large subunit. Interacts with the portal protein. It depends on Mn(2+) as a cofactor. The cofactor is Mg(2+).

In terms of biological role, the terminase large subunit acts as an ATP driven molecular motor necessary for viral DNA translocation into empty capsids and as an endonuclease that cuts the viral genome to initiate and to end a packaging reaction. The terminase lies at a unique vertex of the procapsid and is composed of two subunits, a small terminase subunit involved in viral DNA recognition (packaging sequence), and a large terminase subunit possessing endonucleolytic and ATPase activities. Both terminase subunits heterooligomerize and are docked on the portal protein to form the packaging machine. The terminase large subunit exhibits endonuclease activity and cleaves the viral genome concatemer once the capsid is full (headful packaging). Once the capsid is packaged with the DNA, the terminase complex is substituted by the adapter (gp15) and the stopper protein (gp16) that form the connector. This Bacillus phage SPP1 (Bacteriophage SPP1) protein is Terminase, large subunit (2).